The sequence spans 364 residues: 2-oxoglutarate-dependent dioxygenase imqE (364 aa).

Positions 73–92 (KQKAAHPPGPNPQRGWSGIG) are disordered. One can recognise a Fe2OG dioxygenase domain in the interval 199–315 (DGSELRLLHY…RWSAAYFFKA (117 aa)). 3 residues coordinate Fe cation: His227, Asp229, and His287. Arg306 contributes to the 2-oxoglutarate binding site.

It belongs to the iron/ascorbate-dependent oxidoreductase family. Fe(2+) serves as cofactor.

The protein operates within secondary metabolite biosynthesis. Functionally, 2-oxoglutarate-dependent dioxygenase; part of the gene cluster that mediates the biosynthesis of imizoquins A to D, tripeptide-derived alkaloids that serve a protective role against oxidative stress that are essential for normal germination. ImqB is a canonical three-module NRPS that assembles the tripeptide backbone of the imizoquins via condensation of Trp, Tyr, and Leu-derived precursors. N-methylation by imqF and phenol oxidation by imqC, followed by cyclization via the FAD-dependent oxidase imqH carry out the three-step transformation of L-tyrosine into tetrahydroisoquinoline. Importantly, this sequence requires the presence of a free amine in the tyrosine moiety, indicating that isoquinoline formation occurs prior to peptide bond formation. The imidazolidin-4-one ring of imizoquins could form following additional oxidation of the methyl-derived bridgehead carbon by imqH. Lastly, O-methylation by imqG and leucine hydroxylation by imqE complete biosynthesis of the imizoquins. This Aspergillus flavus (strain ATCC 200026 / FGSC A1120 / IAM 13836 / NRRL 3357 / JCM 12722 / SRRC 167) protein is 2-oxoglutarate-dependent dioxygenase imqE.